Here is a 583-residue protein sequence, read N- to C-terminus: 5-aminolevulinate synthase, erythroid-specific, mitochondrial (583 aa).

Arg-158 is a succinyl-CoA binding site. Pyridoxal 5'-phosphate contacts are provided by Cys-253 and Phe-254. The succinyl-CoA site is built by Ser-275 and Arg-294. 3 residues coordinate pyridoxal 5'-phosphate: Ser-327, His-355, and Thr-383. Lys-386 is an active-site residue. Lys-386 bears the N6-(pyridoxal phosphate)lysine mark. Residues Thr-415 and Thr-416 each coordinate pyridoxal 5'-phosphate. Residue Thr-503 participates in succinyl-CoA binding.

Belongs to the class-II pyridoxal-phosphate-dependent aminotransferase family. As to quaternary structure, homodimer. Pyridoxal 5'-phosphate serves as cofactor.

It localises to the mitochondrion inner membrane. The enzyme catalyses succinyl-CoA + glycine + H(+) = 5-aminolevulinate + CO2 + CoA. Its pathway is porphyrin-containing compound metabolism; protoporphyrin-IX biosynthesis; 5-aminolevulinate from glycine: step 1/1. In terms of biological role, catalyzes the pyridoxal 5'-phosphate (PLP)-dependent condensation of succinyl-CoA and glycine to form aminolevulinic acid (ALA), with CoA and CO2 as by-products. Contributes significantly to heme formation during erythropoiesis. This Danio rerio (Zebrafish) protein is 5-aminolevulinate synthase, erythroid-specific, mitochondrial (alas2).